Reading from the N-terminus, the 225-residue chain is ATP-dependent dethiobiotin synthetase BioD (225 aa).

Position 12–17 (12–17 (EIGKTY)) interacts with ATP. A Mg(2+)-binding site is contributed by T16. Residue K37 is part of the active site. S41 is a substrate binding site. ATP contacts are provided by residues D55, 122-125 (EGVG), and 182-183 (SE). 2 residues coordinate Mg(2+): D55 and E122.

It belongs to the dethiobiotin synthetase family. Homodimer. Mg(2+) serves as cofactor.

It is found in the cytoplasm. It carries out the reaction (7R,8S)-7,8-diammoniononanoate + CO2 + ATP = (4R,5S)-dethiobiotin + ADP + phosphate + 3 H(+). Its pathway is cofactor biosynthesis; biotin biosynthesis; biotin from 7,8-diaminononanoate: step 1/2. Functionally, catalyzes a mechanistically unusual reaction, the ATP-dependent insertion of CO2 between the N7 and N8 nitrogen atoms of 7,8-diaminopelargonic acid (DAPA, also called 7,8-diammoniononanoate) to form a ureido ring. In Methylobacterium nodulans (strain LMG 21967 / CNCM I-2342 / ORS 2060), this protein is ATP-dependent dethiobiotin synthetase BioD.